A 79-amino-acid polypeptide reads, in one-letter code: uncharacterized protein (79 aa).

Belongs to the asfivirus D79L family.

This is an uncharacterized protein from Ornithodoros (relapsing fever ticks).